The primary structure comprises 745 residues: MNNRRNGLFRNSLFYILMFLSLMGIIYFFFGGNSGSQTQNIRYSEFVKQLDKNNVKNVSIQPSGGVYKVTGSYRKARTTSSANALGIKSASTKTTSFSTTMLENNSTVDQVSKLAAKHDVKVTAKAEESSGIWVTLLMYIAPVILMLFLFYMMMGQAGQGGGNNRVMNFGKTKAKPADSKQNKVRFSDVAGEEEEKQELVEVVEFLKDPRKFVSLGARIPSGVLLEGPPGTGKTLLAKAVAGEAGVPFFSISGSDFVEMFVGVGASRVRDLFEQAKKNAPSIIFIDEIDAVGRQRGNGMGGGHDEREQTLNQLLVEMDGFTGNEGVIVMAATNRSDVLDPALLRPGRFDRKILVGRPDVKGREAILKVHAKNKPLAADVDLKEIAKQTPGFVGADLENLLNEAALLAARRNKKQVDAADLDEAEDRVIAGPAKHDRVVNKHERETVAYHEAGHTIVGLVLNDARVVHKVTIVPRGRAGGYAIMLPREDQMLMSKRDAKEQMAGLMGGRAAEEIIFGAQSSGASNDFEQATQIARAMVTQYGMSEKLGPVELENANQQAAYQQGMGASAFSQHTAQLIDDEVRRLSQEAHQTATDIIESHREQHKLIAEALLKYETLDEKQILSLFKTGKMPEKDSNEFPSEKAATFEESKRELERREAEKHAQNQSADDKQADSADTTTNVSVAEPSFPSESDASSEVSADSSVNSTANSATESATDSDVATSATGLPNAESATPSSQDDTNSQA.

Residues 1-11 (MNNRRNGLFRN) are Cytoplasmic-facing. The chain crosses the membrane as a helical span at residues 12–32 (SLFYILMFLSLMGIIYFFFGG). Residues 33–131 (NSGSQTQNIR…VTAKAEESSG (99 aa)) lie on the Extracellular side of the membrane. A helical membrane pass occupies residues 132 to 152 (IWVTLLMYIAPVILMLFLFYM). The Cytoplasmic portion of the chain corresponds to 153 to 745 (MMGQAGQGGG…SSQDDTNSQA (593 aa)). 227 to 234 (GPPGTGKT) contacts ATP. His-449 serves as a coordination point for Zn(2+). The active site involves Glu-450. Zn(2+) is bound by residues His-453 and Asp-525. The segment covering 630–673 (MPEKDSNEFPSEKAATFEESKRELERREAEKHAQNQSADDKQAD) has biased composition (basic and acidic residues). Positions 630 to 745 (MPEKDSNEFP…SSQDDTNSQA (116 aa)) are disordered. A compositionally biased stretch (low complexity) spans 690 to 704 (SESDASSEVSADSSV). The span at 705–745 (NSTANSATESATDSDVATSATGLPNAESATPSSQDDTNSQA) shows a compositional bias: polar residues.

The protein in the central section; belongs to the AAA ATPase family. It in the C-terminal section; belongs to the peptidase M41 family. As to quaternary structure, homohexamer. The cofactor is Zn(2+).

It localises to the cell membrane. Acts as a processive, ATP-dependent zinc metallopeptidase for both cytoplasmic and membrane proteins. Plays a role in the quality control of integral membrane proteins. The polypeptide is ATP-dependent zinc metalloprotease FtsH (Lactiplantibacillus plantarum (strain ATCC BAA-793 / NCIMB 8826 / WCFS1) (Lactobacillus plantarum)).